Here is a 419-residue protein sequence, read N- to C-terminus: Gamma-glutamyl phosphate reductase (419 aa).

It belongs to the gamma-glutamyl phosphate reductase family.

It localises to the cytoplasm. The enzyme catalyses L-glutamate 5-semialdehyde + phosphate + NADP(+) = L-glutamyl 5-phosphate + NADPH + H(+). It functions in the pathway amino-acid biosynthesis; L-proline biosynthesis; L-glutamate 5-semialdehyde from L-glutamate: step 2/2. Its function is as follows. Catalyzes the NADPH-dependent reduction of L-glutamate 5-phosphate into L-glutamate 5-semialdehyde and phosphate. The product spontaneously undergoes cyclization to form 1-pyrroline-5-carboxylate. This chain is Gamma-glutamyl phosphate reductase, found in Azobacteroides pseudotrichonymphae genomovar. CFP2.